The sequence spans 256 residues: Undecaprenyl-diphosphatase (256 aa).

Helical transmembrane passes span 1–21, 39–59, 70–90, 97–117, 134–154, 176–196, 205–225, and 235–255; these read MTIL…FLPI, NAIN…AVIF, IDLW…GFIF, LFSL…FLIV, AISL…LIPG, AEFS…YDLL, ANLI…YLSI, and FTFF…LLFF.

The protein belongs to the UppP family.

It localises to the cell inner membrane. It carries out the reaction di-trans,octa-cis-undecaprenyl diphosphate + H2O = di-trans,octa-cis-undecaprenyl phosphate + phosphate + H(+). Functionally, catalyzes the dephosphorylation of undecaprenyl diphosphate (UPP). Confers resistance to bacitracin. This is Undecaprenyl-diphosphatase from Sulfurimonas denitrificans (strain ATCC 33889 / DSM 1251) (Thiomicrospira denitrificans (strain ATCC 33889 / DSM 1251)).